The chain runs to 661 residues: 7-beta-hydroxy-3-oxochol-24-oyl-CoA 4-desaturase (661 aa).

Gln-104 provides a ligand contact to FMN. Residue 168–171 (HCAH) coordinates substrate. Tyr-173 acts as the Proton donor in catalysis. Residues Arg-222, Lys-298, and 320–321 (GR) contribute to the FMN site. Residues Cys-344, Cys-347, Cys-351, and Cys-363 each coordinate [4Fe-4S] cluster. FAD-binding residues include Gly-394, Glu-413, Gln-421, Lys-431, and Ala-458.

The protein in the N-terminal section; belongs to the NADH:flavin oxidoreductase/NADH oxidase family. Homotrimer. It depends on FMN as a cofactor. FAD is required as a cofactor. [4Fe-4S] cluster serves as cofactor.

The enzyme catalyses 7beta-hydroxy-3-oxochol-24-oyl-CoA + NAD(+) = 7beta-hydroxy-3-oxochol-4-en-24-oyl-CoA + NADH + H(+). It functions in the pathway lipid metabolism; bile acid degradation. Activity is inhibited by sulfhydryl-reactive compounds, acriflavine, o-phenanthroline and EDTA. Its function is as follows. NADH-dependent flavin oxidoreductase. Stereo-specific NAD(H)-dependent 3-oxo-delta4-cholenoic acid oxidoreductase involved in bile acid 7beta-dehydroxylation. This chain is 7-beta-hydroxy-3-oxochol-24-oyl-CoA 4-desaturase, found in Clostridium scindens (strain JCM 10418 / VPI 12708).